Here is a 106-residue protein sequence, read N- to C-terminus: Large ribosomal subunit protein bL21 (106 aa).

It belongs to the bacterial ribosomal protein bL21 family. Part of the 50S ribosomal subunit. Contacts protein L20.

In terms of biological role, this protein binds to 23S rRNA in the presence of protein L20. In Xylella fastidiosa (strain 9a5c), this protein is Large ribosomal subunit protein bL21.